A 171-amino-acid chain; its full sequence is Protein phosphatase 1 regulatory subunit 1A (171 aa).

Met1 carries the N-acetylmethionine modification. Positions 1-171 (MEQDNSPRKI…PLDSKGANSV (171 aa)) are disordered. Residues 9–12 (KIQF) form an essential for activity region. The span at 19–29 (PHLDPEAAEQI) shows a compositional bias: basic and acidic residues. Residue Thr35 is modified to Phosphothreonine; by PKA. The essential for activity stretch occupies residues 42-54 (TSDQSSPEIDEDR). Residues Ser43, Ser46, Ser47, and Ser67 each carry the phosphoserine modification. Residues 135–157 (KTAECIPKTHERGSKEPSTKEPS) show a composition bias toward basic and acidic residues. The segment at 143-171 (THERGSKEPSTKEPSTHIPPLDSKGANSV) is interaction with PPP1R15A.

Belongs to the protein phosphatase inhibitor 1 family. In terms of assembly, interacts with PPP1R15A. Phosphorylation of Thr-35 is required for activity.

In terms of biological role, inhibitor of protein-phosphatase 1. This protein may be important in hormonal control of glycogen metabolism. Hormones that elevate intracellular cAMP increase I-1 activity in many tissues. I-1 activation may impose cAMP control over proteins that are not directly phosphorylated by PKA. Following a rise in intracellular calcium, I-1 is inactivated by calcineurin (or PP2B). Does not inhibit type-2 phosphatases. The protein is Protein phosphatase 1 regulatory subunit 1A (PPP1R1A) of Homo sapiens (Human).